A 300-amino-acid chain; its full sequence is Delta(7)-sterol 5(6)-desaturase erg31 (300 aa).

3 helical membrane-spanning segments follow: residues 33–53 (ISLF…FASL), 78–98 (VLTA…WFLA), and 117–137 (YFLC…YWAH). A Fatty acid hydroxylase domain is found at 123–248 (PLFVMFSDFG…FTTLFDRLGN (126 aa)). A Histidine box-1 motif is present at residues 137–141 (HRFLH). Residues 150–154 (HKLHH) carry the Histidine box-2 motif. Residues 180-200 (HLFPFFFPLHKLTYLALFTFV) form a helical membrane-spanning segment. Positions 225 to 229 (HNGHH) match the Histidine box-3 motif.

The protein belongs to the sterol desaturase family. Fe cation is required as a cofactor.

The protein resides in the endoplasmic reticulum membrane. The catalysed reaction is episterol + 2 Fe(II)-[cytochrome b5] + O2 + 2 H(+) = 5-dehydroepisterol + 2 Fe(III)-[cytochrome b5] + 2 H2O. It functions in the pathway steroid metabolism; ergosterol biosynthesis. C-5 sterol desaturase; part of the third module of ergosterol biosynthesis pathway that includes by the late steps of the pathway. Erg31 and erg32 catalyze the introduction of a C-5 double bond in the B ring to produce 5-dehydroepisterol. The third module or late pathway involves the ergosterol synthesis itself through consecutive reactions that mainly occur in the endoplasmic reticulum (ER) membrane. Firstly, the squalene synthase erg9 catalyzes the condensation of 2 farnesyl pyrophosphate moieties to form squalene, which is the precursor of all steroids. Secondly, squalene is converted into lanosterol by the consecutive action of the squalene epoxidase erg1 and the lanosterol synthase erg7. The lanosterol 14-alpha-demethylase erg11/cyp1 catalyzes C14-demethylation of lanosterol to produce 4,4'-dimethyl cholesta-8,14,24-triene-3-beta-ol. In the next steps, a complex process involving various demethylation, reduction and desaturation reactions catalyzed by the C-14 reductase erg24 and the C-4 demethylation complex erg25-erg26-erg27 leads to the production of zymosterol. Erg28 likely functions in the C-4 demethylation complex reaction by tethering erg26 and Erg27 to the endoplasmic reticulum or to facilitate interaction between these proteins. Then, the sterol 24-C-methyltransferase erg6 catalyzes the methyl transfer from S-adenosyl-methionine to the C-24 of zymosterol to form fecosterol. The C-8 sterol isomerase erg2 catalyzes the reaction which results in unsaturation at C-7 in the B ring of sterols and thus converts fecosterol to episterol. The sterol-C5-desaturases erg31 and erg32 then catalyze the introduction of a C-5 double bond in the B ring to produce 5-dehydroepisterol. The C-22 sterol desaturase erg5 further converts 5-dehydroepisterol into ergosta-5,7,22,24(28)-tetraen-3beta-ol by forming the C-22(23) double bond in the sterol side chain. Finally, ergosta-5,7,22,24(28)-tetraen-3beta-ol is substrate of the C-24(28) sterol reductase erg4 to produce ergosterol. In the genus Schizosaccharomyces, a second route exists between lanosterol and fecosterol, via the methylation of lanosterol to eburicol by erg6, followed by C14-demethylation by erg11/cyp1 and C4-demethylation by the demethylation complex erg25-erg26-erg27. This is Delta(7)-sterol 5(6)-desaturase erg31 from Schizosaccharomyces pombe (strain 972 / ATCC 24843) (Fission yeast).